A 142-amino-acid chain; its full sequence is Large ribosomal subunit protein uL13 (142 aa).

Belongs to the universal ribosomal protein uL13 family. In terms of assembly, part of the 50S ribosomal subunit.

In terms of biological role, this protein is one of the early assembly proteins of the 50S ribosomal subunit, although it is not seen to bind rRNA by itself. It is important during the early stages of 50S assembly. The polypeptide is Large ribosomal subunit protein uL13 (Pseudomonas fluorescens (strain ATCC BAA-477 / NRRL B-23932 / Pf-5)).